Consider the following 303-residue polypeptide: Elongation factor Ts (303 aa).

Residues 80–83 (TDFV) form an involved in Mg(2+) ion dislocation from EF-Tu region.

It belongs to the EF-Ts family.

The protein localises to the cytoplasm. In terms of biological role, associates with the EF-Tu.GDP complex and induces the exchange of GDP to GTP. It remains bound to the aminoacyl-tRNA.EF-Tu.GTP complex up to the GTP hydrolysis stage on the ribosome. The protein is Elongation factor Ts of Clostridium perfringens (strain ATCC 13124 / DSM 756 / JCM 1290 / NCIMB 6125 / NCTC 8237 / Type A).